A 243-amino-acid polypeptide reads, in one-letter code: UPF0280 protein Memar_1519 (243 aa).

Belongs to the UPF0280 family.

The protein is UPF0280 protein Memar_1519 of Methanoculleus marisnigri (strain ATCC 35101 / DSM 1498 / JR1).